The chain runs to 668 residues: CLK4-associating serine/arginine rich protein (668 aa).

The residue at position 101 (serine 101) is a Phosphoserine. Disordered stretches follow at residues 173-232 and 252-668; these read AEVE…GMAD and AKAL…HYRH. The span at 182 to 214 shows a compositional bias: acidic residues; that stretch reads PEEEESPAEEESNSDEDEVIPDIDVEVDVDELN. Basic residues predominate over residues 265-283; that stretch reads RRSRRQRREFREKRLRGRK. Phosphoserine is present on residues serine 285 and serine 294. Residues 290–313 are compositionally biased toward basic and acidic residues; the sequence is ARRDSPTYDPYKRSPSESSSESRS. Phosphothreonine is present on threonine 327. 2 positions are modified to phosphoserine: serine 331 and serine 335. Low complexity-rich tracts occupy residues 340–353 and 378–395; these read AAAA…GAAP and SSSS…SRSS. The span at 396-435 shows a compositional bias: basic residues; the sequence is SRSRRGYYRSGRHARSRSRSWSRSRSRSRRYSRSRSRGRR. The span at 436-446 shows a compositional bias: basic and acidic residues; sequence HSDGGSRDGHR. Residues 475–486 show a composition bias toward basic residues; it reads RGARGPRHHSSS. 2 stretches are compositionally biased toward low complexity: residues 487-510 and 518-527; these read HSRS…SRSQ and QSHSQSQSHS. Serine 541 is subject to Phosphoserine. A Phosphothreonine modification is found at threonine 567. Residues 579-641 are a coiled coil; the sequence is ALNRQFKADK…ERQYSRQSRS (63 aa). Basic and acidic residues-rich tracts occupy residues 584–611 and 619–635; these read FKAD…ELRA and KERE…ERQY. A compositionally biased stretch (low complexity) spans 636 to 645; the sequence is SRQSRSPSPR. Residues 653–668 are compositionally biased toward basic residues; the sequence is SRRRSRSRSRSPHYRH.

The protein belongs to the splicing factor SR family. As to quaternary structure, probably interacts with CLK4. Post-translationally, phosphorylated in vitro by CLK4. In terms of tissue distribution, highly expressed in brain. Expressed at intermediate level in lung and liver. In brain, it is expressed in the hippocampus, cerebellum and olfactory bulb.

It is found in the nucleus. It localises to the nucleoplasm. Probably functions as an alternative splicing regulator. May regulate the mRNA splicing of genes such as CLK1. May act by regulating members of the CLK kinase family. The protein is CLK4-associating serine/arginine rich protein (Clasrp) of Mus musculus (Mouse).